The following is a 75-amino-acid chain: Translation initiation factor IF-1, chloroplastic (75 aa).

It belongs to the IF-1 family. In terms of assembly, component of the 30S ribosomal translation pre-initiation complex which assembles on the 30S ribosome in the order IF-2 and IF-3, IF-1 and N-formylmethionyl-tRNA(fMet); mRNA recruitment can occur at any time during PIC assembly.

The protein localises to the plastid. It localises to the chloroplast. Functionally, one of the essential components for the initiation of protein synthesis. Stabilizes the binding of IF-2 and IF-3 on the 30S subunit to which N-formylmethionyl-tRNA(fMet) subsequently binds. Helps modulate mRNA selection, yielding the 30S pre-initiation complex (PIC). Upon addition of the 50S ribosomal subunit IF-1, IF-2 and IF-3 are released leaving the mature 70S translation initiation complex. This is Translation initiation factor IF-1, chloroplastic (infA) from Cucumis sativus (Cucumber).